Here is a 301-residue protein sequence, read N- to C-terminus: Nucleotide-binding protein MAB_2783c (301 aa).

24–31 (GLSGAGRG) is an ATP binding site. Residue 75–78 (DVRS) coordinates GTP.

The protein belongs to the RapZ-like family.

In terms of biological role, displays ATPase and GTPase activities. The protein is Nucleotide-binding protein MAB_2783c of Mycobacteroides abscessus (strain ATCC 19977 / DSM 44196 / CCUG 20993 / CIP 104536 / JCM 13569 / NCTC 13031 / TMC 1543 / L948) (Mycobacterium abscessus).